Consider the following 546-residue polypeptide: Chaperonin GroEL 4 (546 aa).

Residues 30–33, lysine 51, 87–91, glycine 415, and aspartate 496 each bind ATP; these read TLGP and DGTTT.

The protein belongs to the chaperonin (HSP60) family. Forms a cylinder of 14 subunits composed of two heptameric rings stacked back-to-back. Interacts with the co-chaperonin GroES.

Its subcellular location is the cytoplasm. It catalyses the reaction ATP + H2O + a folded polypeptide = ADP + phosphate + an unfolded polypeptide.. Together with its co-chaperonin GroES, plays an essential role in assisting protein folding. The GroEL-GroES system forms a nano-cage that allows encapsulation of the non-native substrate proteins and provides a physical environment optimized to promote and accelerate protein folding. This chain is Chaperonin GroEL 4, found in Bradyrhizobium sp. (strain BTAi1 / ATCC BAA-1182).